Here is a 379-residue protein sequence, read N- to C-terminus: Queuine tRNA-ribosyltransferase (379 aa).

The active-site Proton acceptor is D94. Residues 94–98 (DSGGF), D148, Q191, and G218 contribute to the substrate site. Positions 249–255 (GVGSPDS) are RNA binding. The Nucleophile role is filled by D268. Positions 273–277 (TRIAR) are RNA binding; important for wobble base 34 recognition. Zn(2+) contacts are provided by C306, C308, C311, and H337.

Belongs to the queuine tRNA-ribosyltransferase family. Homodimer. Within each dimer, one monomer is responsible for RNA recognition and catalysis, while the other monomer binds to the replacement base PreQ1. Zn(2+) serves as cofactor.

The catalysed reaction is 7-aminomethyl-7-carbaguanine + guanosine(34) in tRNA = 7-aminomethyl-7-carbaguanosine(34) in tRNA + guanine. It participates in tRNA modification; tRNA-queuosine biosynthesis. Catalyzes the base-exchange of a guanine (G) residue with the queuine precursor 7-aminomethyl-7-deazaguanine (PreQ1) at position 34 (anticodon wobble position) in tRNAs with GU(N) anticodons (tRNA-Asp, -Asn, -His and -Tyr). Catalysis occurs through a double-displacement mechanism. The nucleophile active site attacks the C1' of nucleotide 34 to detach the guanine base from the RNA, forming a covalent enzyme-RNA intermediate. The proton acceptor active site deprotonates the incoming PreQ1, allowing a nucleophilic attack on the C1' of the ribose to form the product. After dissociation, two additional enzymatic reactions on the tRNA convert PreQ1 to queuine (Q), resulting in the hypermodified nucleoside queuosine (7-(((4,5-cis-dihydroxy-2-cyclopenten-1-yl)amino)methyl)-7-deazaguanosine). The polypeptide is Queuine tRNA-ribosyltransferase (Listeria monocytogenes serovar 1/2a (strain ATCC BAA-679 / EGD-e)).